A 254-amino-acid polypeptide reads, in one-letter code: Triosephosphate isomerase (254 aa).

12-14 (NWK) is a binding site for substrate. The Electrophile role is filled by His-99. Glu-169 functions as the Proton acceptor in the catalytic mechanism. Residues Gly-175, Ser-214, and 235 to 236 (GG) contribute to the substrate site.

The protein belongs to the triosephosphate isomerase family. As to quaternary structure, homodimer.

It localises to the cytoplasm. The enzyme catalyses D-glyceraldehyde 3-phosphate = dihydroxyacetone phosphate. The protein operates within carbohydrate biosynthesis; gluconeogenesis. Its pathway is carbohydrate degradation; glycolysis; D-glyceraldehyde 3-phosphate from glycerone phosphate: step 1/1. Its function is as follows. Involved in the gluconeogenesis. Catalyzes stereospecifically the conversion of dihydroxyacetone phosphate (DHAP) to D-glyceraldehyde-3-phosphate (G3P). The chain is Triosephosphate isomerase from Bartonella quintana (strain Toulouse) (Rochalimaea quintana).